A 187-amino-acid polypeptide reads, in one-letter code: Nicotinamide-nucleotide adenylyltransferase (187 aa).

This sequence belongs to the archaeal NMN adenylyltransferase family.

Its subcellular location is the cytoplasm. It carries out the reaction beta-nicotinamide D-ribonucleotide + ATP + H(+) = diphosphate + NAD(+). It functions in the pathway cofactor biosynthesis; NAD(+) biosynthesis; NAD(+) from nicotinamide D-ribonucleotide: step 1/1. This is Nicotinamide-nucleotide adenylyltransferase from Thermococcus onnurineus (strain NA1).